We begin with the raw amino-acid sequence, 65 residues long: SPbeta prophage-derived uncharacterized protein YorO (65 aa).

This chain is SPbeta prophage-derived uncharacterized protein YorO (yorO), found in Bacillus subtilis (strain 168).